Reading from the N-terminus, the 450-residue chain is 23S rRNA (uracil(1939)-C(5))-methyltransferase RlmD (450 aa).

Residues Ser12–Lys70 enclose the TRAM domain. 4 residues coordinate [4Fe-4S] cluster: Cys83, Cys89, Cys92, and Cys171. S-adenosyl-L-methionine contacts are provided by Gln283, Phe312, Asn317, Glu333, Asp360, and Asp380. Residue Cys406 is the Nucleophile of the active site.

This sequence belongs to the class I-like SAM-binding methyltransferase superfamily. RNA M5U methyltransferase family. RlmD subfamily.

It carries out the reaction uridine(1939) in 23S rRNA + S-adenosyl-L-methionine = 5-methyluridine(1939) in 23S rRNA + S-adenosyl-L-homocysteine + H(+). In terms of biological role, catalyzes the formation of 5-methyl-uridine at position 1939 (m5U1939) in 23S rRNA. The sequence is that of 23S rRNA (uracil(1939)-C(5))-methyltransferase RlmD from Shewanella baltica (strain OS223).